The sequence spans 231 residues: Small ribosomal subunit protein uS3 (231 aa).

The KH type-2 domain maps to 39–107 (IRELLHKELK…DVVLNIVEIR (69 aa)).

It belongs to the universal ribosomal protein uS3 family. In terms of assembly, part of the 30S ribosomal subunit. Forms a tight complex with proteins S10 and S14.

Its function is as follows. Binds the lower part of the 30S subunit head. Binds mRNA in the 70S ribosome, positioning it for translation. The sequence is that of Small ribosomal subunit protein uS3 from Nitrobacter winogradskyi (strain ATCC 25391 / DSM 10237 / CIP 104748 / NCIMB 11846 / Nb-255).